A 254-amino-acid polypeptide reads, in one-letter code: Imidazole glycerol phosphate synthase subunit HisF (254 aa).

Active-site residues include Asp12 and Asp131.

This sequence belongs to the HisA/HisF family. Heterodimer of HisH and HisF.

The protein localises to the cytoplasm. The catalysed reaction is 5-[(5-phospho-1-deoxy-D-ribulos-1-ylimino)methylamino]-1-(5-phospho-beta-D-ribosyl)imidazole-4-carboxamide + L-glutamine = D-erythro-1-(imidazol-4-yl)glycerol 3-phosphate + 5-amino-1-(5-phospho-beta-D-ribosyl)imidazole-4-carboxamide + L-glutamate + H(+). It participates in amino-acid biosynthesis; L-histidine biosynthesis; L-histidine from 5-phospho-alpha-D-ribose 1-diphosphate: step 5/9. In terms of biological role, IGPS catalyzes the conversion of PRFAR and glutamine to IGP, AICAR and glutamate. The HisF subunit catalyzes the cyclization activity that produces IGP and AICAR from PRFAR using the ammonia provided by the HisH subunit. The chain is Imidazole glycerol phosphate synthase subunit HisF from Rhizorhabdus wittichii (strain DSM 6014 / CCUG 31198 / JCM 15750 / NBRC 105917 / EY 4224 / RW1) (Sphingomonas wittichii).